The chain runs to 154 residues: Transcriptional repressor NrdR (154 aa).

A zinc finger lies at 3–34 (CPFCTHPDTRVADSRLMEERNAVRRRRHCPNC). The 91-residue stretch at 49–139 (PAVIGPDKKR…LHKRFDNPAD (91 aa)) folds into the ATP-cone domain.

It belongs to the NrdR family. The cofactor is Zn(2+).

Negatively regulates transcription of bacterial ribonucleotide reductase nrd genes and operons by binding to NrdR-boxes. In Neisseria meningitidis serogroup A / serotype 4A (strain DSM 15465 / Z2491), this protein is Transcriptional repressor NrdR.